Reading from the N-terminus, the 324-residue chain is Anthranilate phosphoribosyltransferase (324 aa).

Residues Gly75, 78–79 (GD), Thr83, 85–88 (NVST), 102–110 (KHGNFGITG), and Ser114 contribute to the 5-phospho-alpha-D-ribose 1-diphosphate site. Position 75 (Gly75) interacts with anthranilate. Ser87 provides a ligand contact to Mg(2+). Asn105 serves as a coordination point for anthranilate. An anthranilate-binding site is contributed by Arg160. Residues Asp216 and Glu217 each contribute to the Mg(2+) site.

The protein belongs to the anthranilate phosphoribosyltransferase family. In terms of assembly, homodimer. It depends on Mg(2+) as a cofactor.

The enzyme catalyses N-(5-phospho-beta-D-ribosyl)anthranilate + diphosphate = 5-phospho-alpha-D-ribose 1-diphosphate + anthranilate. Its pathway is amino-acid biosynthesis; L-tryptophan biosynthesis; L-tryptophan from chorismate: step 2/5. Functionally, catalyzes the transfer of the phosphoribosyl group of 5-phosphorylribose-1-pyrophosphate (PRPP) to anthranilate to yield N-(5'-phosphoribosyl)-anthranilate (PRA). The protein is Anthranilate phosphoribosyltransferase of Picrophilus torridus (strain ATCC 700027 / DSM 9790 / JCM 10055 / NBRC 100828 / KAW 2/3).